The primary structure comprises 218 residues: Thiopurine S-methyltransferase (218 aa).

Positions 10, 45, 66, and 123 each coordinate S-adenosyl-L-methionine.

It belongs to the class I-like SAM-binding methyltransferase superfamily. TPMT family.

It is found in the cytoplasm. It carries out the reaction S-adenosyl-L-methionine + a thiopurine = S-adenosyl-L-homocysteine + a thiopurine S-methylether.. This Pseudomonas fluorescens (strain SBW25) protein is Thiopurine S-methyltransferase.